The following is a 386-amino-acid chain: Succinate--CoA ligase [ADP-forming] subunit beta (386 aa).

The 236-residue stretch at 9–244 (KEILRSYGVS…LDEEDPKEVE (236 aa)) folds into the ATP-grasp domain. Residues Lys46, 53 to 55 (GRG), Glu99, Cys102, and Glu107 contribute to the ATP site. Residues Asn199 and Asp213 each contribute to the Mg(2+) site. Residues Asn264 and 321-323 (GIM) contribute to the substrate site.

It belongs to the succinate/malate CoA ligase beta subunit family. Heterotetramer of two alpha and two beta subunits. Requires Mg(2+) as cofactor.

It carries out the reaction succinate + ATP + CoA = succinyl-CoA + ADP + phosphate. The enzyme catalyses GTP + succinate + CoA = succinyl-CoA + GDP + phosphate. It functions in the pathway carbohydrate metabolism; tricarboxylic acid cycle; succinate from succinyl-CoA (ligase route): step 1/1. Functionally, succinyl-CoA synthetase functions in the citric acid cycle (TCA), coupling the hydrolysis of succinyl-CoA to the synthesis of either ATP or GTP and thus represents the only step of substrate-level phosphorylation in the TCA. The beta subunit provides nucleotide specificity of the enzyme and binds the substrate succinate, while the binding sites for coenzyme A and phosphate are found in the alpha subunit. This chain is Succinate--CoA ligase [ADP-forming] subunit beta, found in Geobacillus thermodenitrificans (strain NG80-2).